A 165-amino-acid chain; its full sequence is MAPKKAKKRIEGANSNVFSMFEQAQIQEFKEAFTIMDQNRDGFIDKADLRDTFAALGRLNVKNEEIDEMIKEAPGPINFTVFLTMFGEKLKGADPEETILNAFKVFDPEGKGLKSAYIKEMLMTQEGRFSQEEIDQMFAAFPPDVSGNLDYKNLVHVITHGEEKD.

Ala-2 is subject to N,N,N-trimethylalanine. EF-hand domains lie at 24–59 (AQIQ…LGRL), 94–128 (DPEE…QEGR), and 129–164 (FSQE…GEEK). Ca(2+)-binding residues include Asp-37, Asn-39, Asp-41, and Asp-48.

As to quaternary structure, myosin is a hexamer of 2 heavy chains and 4 light chains. In terms of processing, the N-terminus is blocked. N,N,N-trimethylalanine, found in other myosin light chains would not have been detected in the N-terminal tryptic peptide in PubMed:7319048 because it would remain trimethylated and ninhydrin negative after hydrolysis.

This Gallus gallus (Chicken) protein is Myosin regulatory light chain 2A, cardiac muscle isoform.